Consider the following 229-residue polypeptide: Ribonuclease 3 (229 aa).

The region spanning 5 to 127 (LARLERQLGY…LIGAIYLDAG (123 aa)) is the RNase III domain. Glu40 is a binding site for Mg(2+). Asp44 is a catalytic residue. Residues Asp113 and Glu116 each coordinate Mg(2+). The active site involves Glu116. The region spanning 154–224 (DPKTRLQEFL…AAAALIALGV (71 aa)) is the DRBM domain.

This sequence belongs to the ribonuclease III family. Homodimer. Requires Mg(2+) as cofactor.

Its subcellular location is the cytoplasm. It catalyses the reaction Endonucleolytic cleavage to 5'-phosphomonoester.. Functionally, digests double-stranded RNA. Involved in the processing of primary rRNA transcript to yield the immediate precursors to the large and small rRNAs (23S and 16S). Processes some mRNAs, and tRNAs when they are encoded in the rRNA operon. Processes pre-crRNA and tracrRNA of type II CRISPR loci if present in the organism. In Pseudomonas fluorescens (strain SBW25), this protein is Ribonuclease 3.